Consider the following 568-residue polypeptide: Acetate--CoA ligase CCL3 (568 aa).

ATP-binding positions include 204–212, 340–345, D437, 449–452, and K547; these read TSGTTASPK, HTYGLS, and IKDR. Residues 272-340 form an SBD1 region; sequence TAKGVYSAIA…MSEKGFKVAH (69 aa). The segment at 341–417 is SBD2; it reads TYGLSETYGP…MRGNAVMKGY (77 aa).

Belongs to the ATP-dependent AMP-binding enzyme family. Mostly expressed in glandular trichomes (lupulin glands) after flowering and in old leaves, and, to a lower extent, in stems, young leaves, cones and flowers.

It is found in the cytoplasm. It localises to the cytosol. It carries out the reaction acetate + ATP + CoA = acetyl-CoA + AMP + diphosphate. The enzyme catalyses propanoate + ATP + CoA = propanoyl-CoA + AMP + diphosphate. The catalysed reaction is butanoate + ATP + CoA = butanoyl-CoA + AMP + diphosphate. It catalyses the reaction 3-methylbutanoate + ATP + CoA = 3-methylbutanoyl-CoA + AMP + diphosphate. It carries out the reaction pentanoate + ATP + CoA = pentanoyl-CoA + AMP + diphosphate. The enzyme catalyses hexanoate + ATP + CoA = hexanoyl-CoA + AMP + diphosphate. The catalysed reaction is 2-methylpropanoate + ATP + CoA = 2-methylpropanoyl-CoA + AMP + diphosphate. It catalyses the reaction 2-methylbutanoate + ATP + CoA = 2-methylbutanoyl-CoA + AMP + diphosphate. It carries out the reaction 2-methylpentanoate + ATP + CoA = 2-methylpentanoyl-CoA + AMP + diphosphate. The enzyme catalyses 3-methylpentanoate + ATP + CoA = 3-methylpentanoyl-CoA + AMP + diphosphate. The catalysed reaction is 4-methylpentanoate + ATP + CoA = 4-methylpentanoyl-CoA + AMP + diphosphate. It functions in the pathway secondary metabolite biosynthesis. In terms of biological role, involved in the biosynthesis of prenylated phenolics natural products which contribute to the bitter taste of beer and display broad biological activities. Catalyzes the ligation of CoA on propanoate to produce propanoyl-CoA. Can also use 2-methylpropanoate (isobutyric acid), acetate, butanoate, isovalerate, pentanoate, hexanoate, 2-methylbutanoate, 2-methylpentanoate, 3-methylpentanoate and 4-methylpentanoate as substrates with a lower efficiency. Triggers the formation of very short chain acyl-CoAs from the corresponding fatty acids, including acetic acid, propanoic acid, butyric acid and its isomer. In Humulus lupulus (European hop), this protein is Acetate--CoA ligase CCL3.